The sequence spans 98 residues: Large ribosomal subunit protein uL23 (98 aa).

This sequence belongs to the universal ribosomal protein uL23 family. As to quaternary structure, part of the 50S ribosomal subunit. Contacts protein L29, and trigger factor when it is bound to the ribosome.

One of the early assembly proteins it binds 23S rRNA. One of the proteins that surrounds the polypeptide exit tunnel on the outside of the ribosome. Forms the main docking site for trigger factor binding to the ribosome. The protein is Large ribosomal subunit protein uL23 of Rickettsia africae (strain ESF-5).